The sequence spans 1377 residues: DNA-directed RNA polymerase subunit beta' (1377 aa).

C60, C62, C75, and C78 together coordinate Zn(2+). The Mg(2+) site is built by D449, D451, and D453. Zn(2+) is bound by residues C777, C851, C858, and C861.

Belongs to the RNA polymerase beta' chain family. In terms of assembly, the RNAP catalytic core consists of 2 alpha, 1 beta, 1 beta' and 1 omega subunit. When a sigma factor is associated with the core the holoenzyme is formed, which can initiate transcription. It depends on Mg(2+) as a cofactor. Requires Zn(2+) as cofactor.

The catalysed reaction is RNA(n) + a ribonucleoside 5'-triphosphate = RNA(n+1) + diphosphate. In terms of biological role, DNA-dependent RNA polymerase catalyzes the transcription of DNA into RNA using the four ribonucleoside triphosphates as substrates. The sequence is that of DNA-directed RNA polymerase subunit beta' from Borreliella afzelii (strain PKo) (Borrelia afzelii).